The primary structure comprises 713 residues: Histone-lysine N-methyltransferase SETDB2 (713 aa).

The segment at Pro78–Asn109 is disordered. A compositionally biased stretch (polar residues) spans His87–Asn109. The MBD domain occupies Leu161 to Gln233. In terms of domain architecture, Pre-SET spans Asp294 to Gly367. Zn(2+) contacts are provided by Cys296, Cys298, Cys302, Cys308, Cys310, Cys348, Cys352, Cys354, and Cys359. Positions Val370 to Gly688 constitute an SET domain. Lys380 to Trp382 is a binding site for S-adenosyl-L-methionine. Composition is skewed to basic and acidic residues over residues Glu511–Leu534 and Thr579–Glu592. 2 disordered regions span residues Glu511–Glu549 and Thr579–Glu608. S-adenosyl-L-methionine is bound by residues Arg642 and Asn645–His646. Positions 648, 701, 703, and 708 each coordinate Zn(2+).

This sequence belongs to the class V-like SAM-binding methyltransferase superfamily.

Its subcellular location is the nucleus. It localises to the chromosome. It carries out the reaction N(6),N(6)-dimethyl-L-lysyl(9)-[histone H3] + S-adenosyl-L-methionine = N(6),N(6),N(6)-trimethyl-L-lysyl(9)-[histone H3] + S-adenosyl-L-homocysteine + H(+). Histone methyltransferase involved in left-right axis specification in early development and mitosis. Specifically trimethylates 'Lys-9' of histone H3 (H3K9me3). H3K9me3 is a specific tag for epigenetic transcriptional repression that recruits HP1 (CBX1, CBX3 and/or CBX5) proteins to methylated histones. Contributes to H3K9me3 in both the interspersed repetitive elements and centromere-associated repeats. Plays a role in chromosome condensation and segregation during mitosis. This chain is Histone-lysine N-methyltransferase SETDB2 (Setdb2), found in Mus musculus (Mouse).